The following is a 326-amino-acid chain: Polycomb complex protein BMI-1-A (326 aa).

An RING-type zinc finger spans residues 18-57 (CVLCGGYFIDATTIIECLHSFCKTCIVRYLETSKYCPICD). Positions 81-95 (KLVPGLFKGEMKRRR) match the Nuclear localization signal motif. 2 disordered regions span residues 239–262 (NPHTDRINHTSGDMESDSGSDKAG) and 274–326 (CIPS…ISSG). The span at 290 to 303 (ISSTINGTSSSSSS) shows a compositional bias: low complexity.

Component of a PRC1-like complex. Interacts with cbx4.

Its subcellular location is the nucleus. Its function is as follows. Component of a Polycomb group (PcG) multiprotein PRC1-like complex, a complex class required to maintain the transcriptionally repressive state of many genes, including Hox genes, throughout development. PcG PRC1 complex acts via chromatin remodeling and modification of histones; it mediates monoubiquitination of histone H2A 'Lys-119', rendering chromatin heritably changed in its expressibility. In the PRC1 complex, it is required to stimulate the E3 ubiquitin-protein ligase activity of rnf2. The sequence is that of Polycomb complex protein BMI-1-A (bmi1a) from Xenopus laevis (African clawed frog).